The sequence spans 158 residues: Immunoglobulin J chain (158 aa).

A signal peptide spans 1–22; that stretch reads MKNHLFFWGVLAIFVQAVLVTA. 3 cysteine pairs are disulfide-bonded: C36–C122, C95–C115, and C130–C155. N72 carries N-linked (GlcNAc...) (complex) asparagine glycosylation.

In terms of assembly, part of the secretory IgA (sIgA) complex that consists of two, four or five IgA monomers, and two additional non-Ig polypeptides, namely the JCHAIN and the secretory component (the proteolytic product of PIGR). Part of the secretory IgM (sIgM) complex that consist of five IgM monomers, and two additional non-Ig polypeptides, namely the JCHAIN and the secretory component (the proteolytic product of PIGR). JCHAIN-containing IgM interacts (via CH4 domain) with FCRM (via Ig-like domain). Post-translationally, N-glycosylated. N-glycans attached to Asn-72 varies from truncated, differentially fucosylated to sialylated (NeuGc) complex types: Man3GlcNAc2; GlcNAc2Man3GlcNAc2(Fuc); Gal1GlcNAc1Man3GlcNAc2; GlcNAc2Man3GlcNAc2; GlcNAc1Man3GlcNAc2; GlcNAc1Man2GlcNAc2 and NeuGc1Gal1GlcNAc2Man3GlcNAc2.

It localises to the secreted. In terms of biological role, serves to link two monomer units of either IgM or IgA. In the case of IgM, the J chain-joined dimer is a nucleating unit for the IgM pentamer, and in the case of IgA it induces dimers and/or larger polymers. It also helps to bind these immunoglobulins to secretory component. The sequence is that of Immunoglobulin J chain (JCHAIN) from Equus asinus (Donkey).